The sequence spans 1023 residues: GATOR2 complex protein WDR24 (1023 aa).

WD repeat units lie at residues 16-54 (NLGSPLSAISSSPDSTKLIVAGRDIVKIVSVQNNEFKVT), 64-108 (SLNY…SKSV), 114-154 (DHSR…NASK), 159-199 (PKSE…IAVE), 203-243 (SHQG…SLNN), 245-287 (STIS…IPLF), and 291-329 (DHRDVPTGLIWKSPSSLISCSKDSHLLLNEFQDSYKPYQ). Residues 563 to 578 (SKNIIDNSNDSNQEIN) show a composition bias toward low complexity. 2 disordered regions span residues 563–621 (SKNI…EPPS) and 661–824 (QKST…SIEN). Residues 584-593 (KEDEEEDDDN) are compositionally biased toward acidic residues. Residues 661-681 (QKSTDNISDNNSNVHVNIKRQ) are compositionally biased toward polar residues. The segment covering 682–695 (NQPTNNNNNNSNID) has biased composition (low complexity). Residues 696–742 (NLEKKSNKSKSTKENKESSLTDQNKQKRNDNKEKIDNNEIDNDNKDN) are compositionally biased toward basic and acidic residues. Residues 743 to 759 (NDDDDNDVDNIGEDNDE) are compositionally biased toward acidic residues. Residues 760-812 (INNNNDNNNNNNNNNNNNNNNNNNNNNNNNNNNNNNNNKNNNNDNNNNNNINN) show a composition bias toward low complexity. The segment at 947–969 (ACSSCGKSIPQNSIICEKCNKAS) adopts a C4-type zinc-finger fold. Zn(2+) contacts are provided by C948, C951, C962, C965, C972, C975, C986, C989, H991, H994, H997, C1010, C1014, H1016, and C1018. Residues 970–1021 (SKCSICRLPVKGMWVWCQGCGHGGHLEHMKSWFIDKNQKSCPTGCTHICTPF) form an RING-type; atypical zinc finger.

This sequence belongs to the WD repeat WDR24 family. In terms of assembly, probably part of the GATOR complex.

It is found in the lysosome membrane. It catalyses the reaction S-ubiquitinyl-[E2 ubiquitin-conjugating enzyme]-L-cysteine + [acceptor protein]-L-lysine = [E2 ubiquitin-conjugating enzyme]-L-cysteine + N(6)-ubiquitinyl-[acceptor protein]-L-lysine.. Its pathway is protein modification; protein ubiquitination. Its function is as follows. As a component of the GATOR complex may function in the amino acid-sensing branch of the TORC1 signaling pathway. This chain is GATOR2 complex protein WDR24, found in Dictyostelium discoideum (Social amoeba).